Consider the following 738-residue polypeptide: uncharacterized protein (738 aa).

The span at 1–10 (MQKKVVQSAS) shows a compositional bias: polar residues. Disordered stretches follow at residues 1–23 (MQKKVVQSASKNEELDPHYKRSS), 53–83 (EGTHSASVHPSTSSTSHISSPSAFSVQNPNP), and 219–266 (HQDG…PLST). Residues 55 to 77 (THSASVHPSTSSTSHISSPSAFS) show a composition bias toward low complexity. Residues 246–266 (GSPSPNRSLNVSNNTTPPLST) show a composition bias toward polar residues. Phosphothreonine is present on residues threonine 260 and threonine 261. Positions 292–318 (CAKCQKDNKKCDDARPCQRCIKAKTDC) form a DNA-binding region, zn(2)-C6 fungal-type. The span at 323–335 (RKKRPTGVRRGPY) shows a compositional bias: basic residues. Disordered stretches follow at residues 323-372 (RKKR…SDNQ) and 441-464 (DETGTSSAGSKPFNRKSRNRSFTN). The span at 340 to 352 (DTSNNTKSTTASS) shows a compositional bias: low complexity. A compositionally biased stretch (polar residues) spans 353 to 372 (GHSTQDSLSSKMLDPSSDNQ).

The protein localises to the cytoplasm. The protein resides in the nucleus. This is an uncharacterized protein from Schizosaccharomyces pombe (strain 972 / ATCC 24843) (Fission yeast).